Here is a 178-residue protein sequence, read N- to C-terminus: RNA-binding protein (178 aa).

Residues 108 to 178 form a disordered region; sequence SGFQKPKIGS…KGKGRRGGKR (71 aa). Basic residues predominate over residues 168-178; it reads SKGKGRRGGKR.

Belongs to the phytoreovirus RNA-binding protein family.

The protein localises to the host cytoplasm. Constituent of viral factories. Binds to ssRNA and dsRNA. The sequence is that of RNA-binding protein from Wound tumor virus (strain NJ) (WTV).